We begin with the raw amino-acid sequence, 174 residues long: Translation initiation factor IF-3 (174 aa).

Belongs to the IF-3 family. In terms of assembly, monomer.

The protein resides in the cytoplasm. In terms of biological role, IF-3 binds to the 30S ribosomal subunit and shifts the equilibrium between 70S ribosomes and their 50S and 30S subunits in favor of the free subunits, thus enhancing the availability of 30S subunits on which protein synthesis initiation begins. This chain is Translation initiation factor IF-3, found in Azorhizobium caulinodans (strain ATCC 43989 / DSM 5975 / JCM 20966 / LMG 6465 / NBRC 14845 / NCIMB 13405 / ORS 571).